The following is a 213-amino-acid chain: Pyridoxine/pyridoxamine 5'-phosphate oxidase (213 aa).

Substrate-binding positions include 8-11 (RREY) and Lys67. FMN contacts are provided by residues 62–67 (RIVLLK), 77–78 (FT), Arg83, Lys84, and Gln106. Residues Tyr124, Arg128, and Ser132 each coordinate substrate. Residues 141–142 (QS) and Trp186 each bind FMN. Substrate is bound at residue 192-194 (RLH). Arg196 contacts FMN.

The protein belongs to the pyridoxamine 5'-phosphate oxidase family. Homodimer. The cofactor is FMN.

The enzyme catalyses pyridoxamine 5'-phosphate + O2 + H2O = pyridoxal 5'-phosphate + H2O2 + NH4(+). It carries out the reaction pyridoxine 5'-phosphate + O2 = pyridoxal 5'-phosphate + H2O2. The protein operates within cofactor metabolism; pyridoxal 5'-phosphate salvage; pyridoxal 5'-phosphate from pyridoxamine 5'-phosphate: step 1/1. It participates in cofactor metabolism; pyridoxal 5'-phosphate salvage; pyridoxal 5'-phosphate from pyridoxine 5'-phosphate: step 1/1. Its function is as follows. Catalyzes the oxidation of either pyridoxine 5'-phosphate (PNP) or pyridoxamine 5'-phosphate (PMP) into pyridoxal 5'-phosphate (PLP). The sequence is that of Pyridoxine/pyridoxamine 5'-phosphate oxidase from Shewanella sediminis (strain HAW-EB3).